A 419-amino-acid polypeptide reads, in one-letter code: Fumarylacetoacetase (419 aa).

Serine 2 is modified (N-acetylserine). Serine 84 and serine 92 each carry phosphoserine. Residue aspartate 126 participates in Ca(2+) binding. Tyrosine 128 is a binding site for substrate. The active-site Proton acceptor is histidine 133. Arginine 142 lines the substrate pocket. The Ca(2+) site is built by glutamate 199, glutamate 201, and aspartate 233. Aspartate 233 contacts Mg(2+). Positions 240 and 244 each coordinate substrate. The Mg(2+) site is built by lysine 253 and threonine 257. Serine 309 is subject to Phosphoserine. Threonine 350 contributes to the substrate binding site. Residue serine 417 is modified to Phosphoserine.

The protein belongs to the FAH family. In terms of assembly, homodimer. It depends on Ca(2+) as a cofactor. Mg(2+) is required as a cofactor. Mainly in liver and kidney.

The catalysed reaction is 4-fumarylacetoacetate + H2O = acetoacetate + fumarate + H(+). It functions in the pathway amino-acid degradation; L-phenylalanine degradation; acetoacetate and fumarate from L-phenylalanine: step 6/6. This is Fumarylacetoacetase (Fah) from Rattus norvegicus (Rat).